The chain runs to 395 residues: MATVDRWLLPDGIEEVLPPEAARIEIARRQVLDLFQSWGYELVVTPHIEYLESLLTGAGQDLDQRTFKVVDPQSGRLMGFRADFTPQVARIDAHTLRREGPSRLCYAGSVLHAQPRALSTSRSPIQLGAELYGDASPTSDVEVISLMLATLQLTDVPDVHMDLGHVGIYRGLARAANLSGDVEQQLFDALQRKAVDEVQTLTADLPKDLGNMLRALVELCGGREVLAEARVRLGRAPASVLAALDDLLAIADRLASRYPDLPLYFDLGELRGYHYHTGVVFAVFVPGEGQSIAQGGRYDDIGADFGRARPATGFSTDLKTLVTLGRAEVVLPAGGIWMPDSSDAALWQHVCQLRNEGQRVVQALPGQPLSAALEADCDRQLIQQDGRWQVLPLTH.

Belongs to the class-II aminoacyl-tRNA synthetase family. HisZ subfamily. As to quaternary structure, heteromultimer composed of HisG and HisZ subunits.

The protein resides in the cytoplasm. The protein operates within amino-acid biosynthesis; L-histidine biosynthesis; L-histidine from 5-phospho-alpha-D-ribose 1-diphosphate: step 1/9. In terms of biological role, required for the first step of histidine biosynthesis. May allow the feedback regulation of ATP phosphoribosyltransferase activity by histidine. The chain is ATP phosphoribosyltransferase regulatory subunit from Pseudomonas entomophila (strain L48).